The chain runs to 207 residues: 2,3-bisphosphoglycerate-dependent phosphoglycerate mutase (207 aa).

Substrate contacts are provided by residues 9–16, 22–23, Arg-61, 88–91, Lys-99, 115–116, and 159–160; these read RHGQSDWN, TG, ERDY, RR, and GN. The active-site Tele-phosphohistidine intermediate is His-10. Glu-88 serves as the catalytic Proton donor/acceptor.

Belongs to the phosphoglycerate mutase family. BPG-dependent PGAM subfamily. In terms of assembly, homodimer.

It carries out the reaction (2R)-2-phosphoglycerate = (2R)-3-phosphoglycerate. It participates in carbohydrate degradation; glycolysis; pyruvate from D-glyceraldehyde 3-phosphate: step 3/5. Functionally, catalyzes the interconversion of 2-phosphoglycerate and 3-phosphoglycerate. This is 2,3-bisphosphoglycerate-dependent phosphoglycerate mutase from Beijerinckia indica subsp. indica (strain ATCC 9039 / DSM 1715 / NCIMB 8712).